The sequence spans 354 residues: Uroporphyrinogen decarboxylase (354 aa).

Substrate-binding positions include 27 to 31 (RRAGR), Phe-46, Asp-77, Tyr-154, Thr-209, and His-327.

The protein belongs to the uroporphyrinogen decarboxylase family. As to quaternary structure, homodimer.

The protein resides in the cytoplasm. The catalysed reaction is uroporphyrinogen III + 4 H(+) = coproporphyrinogen III + 4 CO2. It participates in porphyrin-containing compound metabolism; protoporphyrin-IX biosynthesis; coproporphyrinogen-III from 5-aminolevulinate: step 4/4. Catalyzes the decarboxylation of four acetate groups of uroporphyrinogen-III to yield coproporphyrinogen-III. This chain is Uroporphyrinogen decarboxylase, found in Salmonella typhimurium (strain LT2 / SGSC1412 / ATCC 700720).